A 147-amino-acid chain; its full sequence is Hemoglobin subunit beta-A/B (147 aa).

Residues 2–147 (EWTDAERSAI…VVNALKRQYH (146 aa)) form the Globin domain. Heme b is bound by residues His63 and His92.

This sequence belongs to the globin family. In terms of assembly, heterotetramer of two alpha chains and two beta chains. As to expression, red blood cells.

In terms of biological role, involved in oxygen transport from gills to the various peripheral tissues. The chain is Hemoglobin subunit beta-A/B from Cyprinus carpio (Common carp).